We begin with the raw amino-acid sequence, 341 residues long: Ribosomal RNA small subunit methyltransferase C (341 aa).

It belongs to the methyltransferase superfamily. RsmC family. In terms of assembly, monomer.

Its subcellular location is the cytoplasm. The catalysed reaction is guanosine(1207) in 16S rRNA + S-adenosyl-L-methionine = N(2)-methylguanosine(1207) in 16S rRNA + S-adenosyl-L-homocysteine + H(+). In terms of biological role, specifically methylates the guanine in position 1207 of 16S rRNA in the 30S particle. This is Ribosomal RNA small subunit methyltransferase C from Vibrio parahaemolyticus serotype O3:K6 (strain RIMD 2210633).